The chain runs to 246 residues: UDP-N-acetyl-D-mannosaminuronic acid transferase (246 aa).

It belongs to the glycosyltransferase 26 family.

The catalysed reaction is UDP-N-acetyl-alpha-D-mannosaminouronate + N-acetyl-alpha-D-glucosaminyl-di-trans,octa-cis-undecaprenyl diphosphate = beta-D-ManNAcA-(1-&gt;4)-alpha-D-GlcNAc-di-trans,octa-cis-undecaprenyl diphosphate + UDP + H(+). Its pathway is bacterial outer membrane biogenesis; enterobacterial common antigen biosynthesis. In terms of biological role, catalyzes the synthesis of Und-PP-GlcNAc-ManNAcA (Lipid II), the second lipid-linked intermediate involved in enterobacterial common antigen (ECA) synthesis. This is UDP-N-acetyl-D-mannosaminuronic acid transferase from Shigella flexneri.